The following is a 499-amino-acid chain: Pyruvate kinase (499 aa).

Arg50 is a substrate binding site. K(+) is bound by residues Asn52, Ser54, Asp84, and Thr85. 52-55 serves as a coordination point for ATP; it reads NFSH. Residue Arg91 participates in ATP binding. Glu241 provides a ligand contact to Mg(2+). 3 residues coordinate substrate: Gly264, Asp265, and Thr297. Mg(2+) is bound at residue Asp265.

Belongs to the pyruvate kinase family. Homotetramer. Mg(2+) serves as cofactor. The cofactor is K(+).

It catalyses the reaction pyruvate + ATP = phosphoenolpyruvate + ADP + H(+). The protein operates within carbohydrate degradation; glycolysis; pyruvate from D-glyceraldehyde 3-phosphate: step 5/5. Its activity is regulated as follows. Activated by fructose 2,6-bisphosphate, activated by the effector in a non cooperative manner. This chain is Pyruvate kinase (PYK), found in Leishmania mexicana.